The following is a 303-amino-acid chain: Geranylgeranyl pyrophosphate synthase (303 aa).

Positions 30, 33, and 62 each coordinate isopentenyl diphosphate. Residues Asp-69 and Asp-73 each contribute to the Mg(2+) site. Arg-78 serves as a coordination point for dimethylallyl diphosphate. Arg-79 provides a ligand contact to isopentenyl diphosphate. Residues Lys-156, Thr-157, Gln-190, Lys-207, and Lys-217 each coordinate dimethylallyl diphosphate.

It belongs to the FPP/GGPP synthase family. The cofactor is Mg(2+).

The protein localises to the cytoplasm. It catalyses the reaction isopentenyl diphosphate + dimethylallyl diphosphate = (2E)-geranyl diphosphate + diphosphate. The enzyme catalyses isopentenyl diphosphate + (2E)-geranyl diphosphate = (2E,6E)-farnesyl diphosphate + diphosphate. The catalysed reaction is isopentenyl diphosphate + (2E,6E)-farnesyl diphosphate = (2E,6E,10E)-geranylgeranyl diphosphate + diphosphate. It participates in isoprenoid biosynthesis; farnesyl diphosphate biosynthesis; farnesyl diphosphate from geranyl diphosphate and isopentenyl diphosphate: step 1/1. It functions in the pathway isoprenoid biosynthesis; geranyl diphosphate biosynthesis; geranyl diphosphate from dimethylallyl diphosphate and isopentenyl diphosphate: step 1/1. The protein operates within isoprenoid biosynthesis; geranylgeranyl diphosphate biosynthesis; geranylgeranyl diphosphate from farnesyl diphosphate and isopentenyl diphosphate: step 1/1. Its function is as follows. Catalyzes the trans-addition of the three molecules of IPP onto DMAPP to form geranylgeranyl pyrophosphate. The polypeptide is Geranylgeranyl pyrophosphate synthase (Mucor circinelloides f. lusitanicus (Mucor racemosus var. lusitanicus)).